Reading from the N-terminus, the 226-residue chain is 26S proteasome non-ATPase regulatory subunit 10 (226 aa).

The interval methionine 1–aspartate 37 is required for nuclear localization. Residues methionine 1–aspartate 71 are interaction with RB1. ANK repeat units follow at residues glycine 3 to threonine 36, aspartate 37 to lysine 69, aspartate 70 to valine 102, asparagine 103 to lysine 135, aspartate 136 to glutamine 168, aspartate 169 to glutamate 201, and asparagine 202 to glycine 226. Residues aspartate 39–glycine 226 form an interaction with RELA region. The interaction with RB1 stretch occupies residues glutamate 171–glycine 226.

Part of transient complex containing PSMD10, PSMC4, PSMC5 and PAAF1 formed during the assembly of the 26S proteasome. Stays associated throughout the assembly of the PA700/19S RC and is released upon association with the 20S core. Interacts with PSMC4. Interacts with RB1. Interacts with CDK4. Interacts with MDM2. Interacts with RELA. Associates with a CDK4:CCND2 serine/threonine kinase complex. Interacts with ARHGDIA and increases the interaction between ARHGDIA and RHOA, hence promotes ARHGDIA inactivation of RHOA and ROCK. In terms of tissue distribution, tends to be up-regulated in cancer cells with RAS mutations, including lung cancers and adenocarconimas (at protein level).

The protein localises to the cytoplasm. It localises to the nucleus. Acts as a chaperone during the assembly of the 26S proteasome, specifically of the PA700/19S regulatory complex (RC). In the initial step of the base subcomplex assembly is part of an intermediate PSMD10:PSMC4:PSMC5:PAAF1 module which probably assembles with a PSMD5:PSMC2:PSMC1:PSMD2 module. Independently of the proteasome, regulates EGF-induced AKT activation through inhibition of the RHOA/ROCK/PTEN pathway, leading to prolonged AKT activation. Plays an important role in RAS-induced tumorigenesis. Functionally, acts as an proto-oncoprotein by being involved in negative regulation of tumor suppressors RB1 and p53/TP53. Overexpression is leading to phosphorylation of RB1 and proteasomal degradation of RB1. Regulates CDK4-mediated phosphorylation of RB1 by competing with CDKN2A for binding with CDK4. Facilitates binding of MDM2 to p53/TP53 and the mono- and polyubiquitination of p53/TP53 by MDM2 suggesting a function in targeting the TP53:MDM2 complex to the 26S proteasome. Involved in p53-independent apoptosis. Involved in regulation of NF-kappa-B by retaining it in the cytoplasm. Binds to the NF-kappa-B component RELA and accelerates its XPO1/CRM1-mediated nuclear export. The sequence is that of 26S proteasome non-ATPase regulatory subunit 10 (PSMD10) from Homo sapiens (Human).